A 78-amino-acid polypeptide reads, in one-letter code: DNA-directed RNA polymerase subunit Rpo5 (78 aa).

Belongs to the archaeal Rpo5/eukaryotic RPB5 RNA polymerase subunit family. Part of the RNA polymerase complex.

The protein resides in the cytoplasm. It catalyses the reaction RNA(n) + a ribonucleoside 5'-triphosphate = RNA(n+1) + diphosphate. Functionally, DNA-dependent RNA polymerase (RNAP) catalyzes the transcription of DNA into RNA using the four ribonucleoside triphosphates as substrates. The sequence is that of DNA-directed RNA polymerase subunit Rpo5 from Methanosarcina acetivorans (strain ATCC 35395 / DSM 2834 / JCM 12185 / C2A).